A 441-amino-acid chain; its full sequence is GVGFKAGVKDYRLTYYTPEYKTKDTDILAAFRMTPQPGVPAEEAGAAVAAESSTGTWTTVWTDGLTSLDRYKGRCYDIEPVAGEENQYIAYVAYPLDLFEEGSVTNMFTSIVGNVFGFKALRALXXEDLRIPPAYSKTFMGPPHGIQVERDKLNKYGRPLLGCTIKPKLGLSAKNYGRAVYECLRGGLDFTKDDENVNSQPFMRWRDRFLFVAEALFKSQAETGEVKGHYLNATAGTCEEMMKRAIFARELGAPIVMHDYLTGGFTANTSLAFYCRDNGLLLHIHRAMHAVIDRQKDHGMHFRVLAKGLRMSGGDHIHAGTVVGKLEGEREVTLGFVDLLRDDFIQKDRSRGIYFTQDWVSMPGVFPVASGGIHVWHMPALTEIFGDDSVLQFGGGTLGHPWGNAPGAVANRVALEACVQARNEGRDLAREGNEIIREASK.

Lys5 is modified (N6,N6,N6-trimethyllysine). Asn114 and Thr164 together coordinate substrate. Catalysis depends on Lys166, which acts as the Proton acceptor. Position 168 (Lys168) interacts with substrate. 3 residues coordinate Mg(2+): Lys192, Asp194, and Glu195. Position 192 is an N6-carboxylysine (Lys192). The active-site Proton acceptor is His285. Arg286, His318, and Ser370 together coordinate substrate.

It belongs to the RuBisCO large chain family. Type I subfamily. In terms of assembly, heterohexadecamer of 8 large chains and 8 small chains; disulfide-linked. The disulfide link is formed within the large subunit homodimers. Mg(2+) is required as a cofactor. Post-translationally, the disulfide bond which can form in the large chain dimeric partners within the hexadecamer appears to be associated with oxidative stress and protein turnover.

It localises to the plastid. The protein resides in the chloroplast. The catalysed reaction is 2 (2R)-3-phosphoglycerate + 2 H(+) = D-ribulose 1,5-bisphosphate + CO2 + H2O. It catalyses the reaction D-ribulose 1,5-bisphosphate + O2 = 2-phosphoglycolate + (2R)-3-phosphoglycerate + 2 H(+). RuBisCO catalyzes two reactions: the carboxylation of D-ribulose 1,5-bisphosphate, the primary event in carbon dioxide fixation, as well as the oxidative fragmentation of the pentose substrate in the photorespiration process. Both reactions occur simultaneously and in competition at the same active site. The sequence is that of Ribulose bisphosphate carboxylase large chain from Pellaea rotundifolia (Button fern).